A 1365-amino-acid chain; its full sequence is Histone-lysine N-methyltransferase NSD2 (1365 aa).

Residues Thr-110 and Thr-114 each carry the phosphothreonine modification. Ser-121 is modified (phosphoserine). The segment at 149 to 170 (ADVSQSEENGQKPENKARRNRK) is disordered. Ser-172 is subject to Phosphoserine. The PWWP 1 domain maps to 222–286 (VGDLVWSKVS…FEKSLVAFEG (65 aa)). A Phosphoserine modification is found at Ser-376. 2 disordered regions span residues 376–455 (SSGV…RKGD) and 516–658 (EDSG…SKKS). Thr-422 bears the Phosphothreonine mark. Residues 453–521 (KGDAASQFLV…VQAEEDSGNV (69 aa)) constitute a DNA-binding region (HMG box). A Phosphothreonine modification is found at Thr-544. Residues 552-567 (DKHSLRKRDTITDKTA) are compositionally biased toward basic and acidic residues. Polar residues predominate over residues 580–590 (SLKSQAATKNL). Positions 606–622 (AASSALGFSKSSSPSAS) are enriched in low complexity. At Ser-614 the chain carries Phosphoserine. Acidic residues predominate over residues 632 to 648 (PGDEPSESPYESADETQ). PHD-type zinc fingers lie at residues 667-713 (EYVC…CASG), 714-770 (IHSC…CHAS), and 831-875 (VSWC…CRAG). The PWWP 2 domain occupies 880-942 (FQDIIWVKLG…QARVFPYMEG (63 aa)). The 51-residue stretch at 1011 to 1061 (SEIPKCNCKPTDENPCGFDSECLNRMLMFECHPQVCPAGEFCQNQCFTKRQ) folds into the AWS domain. Zn(2+)-binding residues include Cys-1016, Cys-1018, Cys-1026, Cys-1032, Cys-1041, Cys-1046, and Cys-1052. The SET domain maps to 1063 to 1180 (PETKIIKTDG…AGTELTFNYN (118 aa)). S-adenosyl-L-methionine is bound by residues Trp-1075, 1115 to 1118 (THFY), and 1141 to 1142 (NH). A Zn(2+)-binding site is contributed by Cys-1144. Asn-1186 contacts S-adenosyl-L-methionine. Residues 1187–1203 (EKTVCRCGASNCSGFLG) form the Post-SET domain. Cys-1191 lines the Zn(2+) pocket. S-adenosyl-L-methionine is bound at residue Arg-1192. Positions 1193 and 1198 each coordinate Zn(2+). Residues 1207-1232 (KTSTTLSSEEKGKKTKKKTRRRRAKG) form a disordered region. A compositionally biased stretch (basic residues) spans 1219–1230 (KKTKKKTRRRRA). The PHD-type 4; atypical zinc-finger motif lies at 1239–1286 (EDECFRCGDGGQLVLCDRKFCTKAYHLSCLGLGKRPFGKWECPWHHCD). Residues 1333–1365 (VRSTKTEKPPPEPGKPKGKRRRRRGWRRVTEGK) form a disordered region. Residues 1348–1359 (PKGKRRRRRGWR) are compositionally biased toward basic residues.

It belongs to the class V-like SAM-binding methyltransferase superfamily. Histone-lysine methyltransferase family. SET2 subfamily. Interacts with HDAC1. Interacts (via PHD-type zinc fingers 1, 2 and 3) with SALL1. Interacts (via PHD-type 1, 2 and 3) with SALL4. Interacts with NANOG. Interacts with OGT. Interacts (via HMG box) with NKX2-5. Widely expressed. Predominantly expressed in thymus and testis.

Its subcellular location is the nucleus. The protein localises to the chromosome. It localises to the cytoplasm. The protein resides in the nucleolus. It catalyses the reaction L-lysyl(36)-[histone H3] + S-adenosyl-L-methionine = N(6)-methyl-L-lysyl(36)-[histone H3] + S-adenosyl-L-homocysteine + H(+). The catalysed reaction is L-lysyl(36)-[histone H3] + 2 S-adenosyl-L-methionine = N(6),N(6)-dimethyl-L-lysyl(36)-[histone H3] + 2 S-adenosyl-L-homocysteine + 2 H(+). Histone methyltransferase which specifically dimethylates nucleosomal histone H3 at 'Lys-36' (H3K36me2). Also monomethylates nucleosomal histone H3 at 'Lys-36' (H3K36me) in vitro. Does not trimethylate nucleosomal histone H3 at 'Lys-36' (H3K36me3). However, specifically trimethylates histone H3 at 'Lys-36' (H3K36me3) at euchromatic regions in embryonic stem (ES) cells. By methylating histone H3 at 'Lys-36', involved in the regulation of gene transcription during various biological processes. In ES cells, associates with developmental transcription factors such as SALL1 and represses inappropriate gene transcription mediated by histone deacetylation. During heart development, associates with transcription factor NKX2-5 to repress transcription of NKX2-5 target genes. Plays an essential role in adipogenesis, by regulating expression of genes involved in pre-adipocyte differentiation. During T-cell receptor (TCR) and CD28-mediated T-cell activation, promotes the transcription of transcription factor BCL6 which is required for follicular helper T (Tfh) cell differentiation. During B-cell development, required for the generation of the B1 lineage. During B2 cell activation, may contribute to the control of isotype class switch recombination (CRS), splenic germinal center formation, and the humoral immune response. Plays a role in class switch recombination of the immunoglobulin heavy chain (IgH) locus during B-cell activation. By regulating the methylation of histone H3 at 'Lys-36' and histone H4 at 'Lys-20' at the IgH locus, involved in TP53BP1 recruitment to the IgH switch region and promotes the transcription of IgA. Functionally, histone methyltransferase which specifically dimethylates nucleosomal histone H3 at 'Lys-36' (H3K36me2). In terms of biological role, histone methyltransferase which specifically dimethylates nucleosomal histone H3 at 'Lys-36' (H3K36me2). Methylation of histone H3 at 'Lys-27' is controversial. Mono-, di- or tri-methylates histone H3 at 'Lys-27' (H3K27me, H3K27me2 and H3K27me3). Does not methylate histone H3 at 'Lys-27'. May act as a transcription regulator that binds DNA and suppresses IL5 transcription through HDAC recruitment. The sequence is that of Histone-lysine N-methyltransferase NSD2 from Homo sapiens (Human).